The sequence spans 585 residues: Frizzled-5 (585 aa).

An N-terminal signal peptide occupies residues 1–26 (MARPDPSAPPSLLLLLLAQLVGRAAA). Over 27–238 (ASKAPVCQEI…PDERTFATFW (212 aa)) the chain is Extracellular. Positions 28–150 (SKAPVCQEIT…GDAEVLCMDY (123 aa)) constitute an FZ domain. 5 cysteine pairs are disulfide-bonded: Cys-33-Cys-94, Cys-41-Cys-87, Cys-78-Cys-116, Cys-105-Cys-147, and Cys-109-Cys-133. Asn-47 is a glycosylation site (N-linked (GlcNAc...) asparagine). An N-linked (GlcNAc...) asparagine glycan is attached at Asn-151. The segment at 156–182 (TTASPKSFPAKPTLPGPPGAPSSGGEC) is disordered. The helical transmembrane segment at 239-259 (IGLWSVLCFISTSTTVATFLI) threads the bilayer. Residues 260 to 270 (DMERFRYPERP) lie on the Cytoplasmic side of the membrane. A helical membrane pass occupies residues 271–291 (IIFLSACYLCVSLGFLVRLVV). Topologically, residues 292 to 315 (GHASVACSREHSHIHYETTGPALC) are extracellular. Residues 316 to 336 (TVVFLLVYFFGMASSIWWVIL) form a helical membrane-spanning segment. The Cytoplasmic portion of the chain corresponds to 337-358 (SLTWFLAAGMKWGNEAIAGYAQ). The chain crosses the membrane as a helical span at residues 359 to 379 (YFHLAAWLIPSVKSITALALS). At 380-402 (SVDGDPVAGVCYVGNQNLNSLRG) the chain is on the extracellular side. A helical membrane pass occupies residues 403–423 (FVLGPLVLYLLVGTLFLLAGF). Topologically, residues 424 to 449 (VSLFRIRSVIKQGGTKTDKLEKLMIR) are cytoplasmic. A helical transmembrane segment spans residues 450-470 (IGIFTLLYTVPASIVVACYLY). Residues 471–500 (EQHYRESWEAALTCACPGSDAGQPRAKPEY) lie on the Extracellular side of the membrane. Residues 501–521 (WVLMLKYFMCLVVGITSGVWI) traverse the membrane as a helical segment. Residues 522–585 (WSGKTLESWR…YHKQVSLSHV (64 aa)) are Cytoplasmic-facing. The Lys-Thr-X-X-X-Trp motif, mediates interaction with the PDZ domain of Dvl family members motif lies at 525 to 530 (KTLESW). Positions 583-585 (SHV) match the PDZ-binding motif.

Belongs to the G-protein coupled receptor Fz/Smo family. As to quaternary structure, binding of unsaturated fatty acid molecules (via FZ domain) promotes homodimerization (via FZ domain). Interacts with WNT2B. Interacts with WNT7A. Interacts with GOPC. Ubiquitinated by RNF43 and ZNRF3, leading to its degradation by the proteasome.

The protein resides in the cell membrane. Its subcellular location is the golgi apparatus membrane. It is found in the synapse. It localises to the perikaryon. The protein localises to the cell projection. The protein resides in the dendrite. Its subcellular location is the axon. Functionally, receptor for Wnt proteins. Functions in the canonical Wnt/beta-catenin signaling pathway. In vitro activates WNT2, WNT10B, WNT5A, but not WNT2B or WNT4 signaling. In neurons, activation by WNT7A promotes formation of synapses. May be involved in transduction and intercellular transmission of polarity information during tissue morphogenesis and/or in differentiated tissues. Plays a role in yolk sac angiogenesis and in placental vascularization. Plays a role in ocular development. The polypeptide is Frizzled-5 (Fzd5) (Rattus norvegicus (Rat)).